A 391-amino-acid polypeptide reads, in one-letter code: uncharacterized protein (391 aa).

An N-terminal signal peptide occupies residues 1 to 20; the sequence is MRKLFLLSILMIGVIVAFAG. A lipid anchor (S-archaeol cysteine) is attached at C21. The Fe/B12 periplasmic-binding domain maps to 104–377; sequence RIVTDFYCPI…DFAKMIHPEL (274 aa).

The protein resides in the cell membrane. This is an uncharacterized protein from Methanocaldococcus jannaschii (strain ATCC 43067 / DSM 2661 / JAL-1 / JCM 10045 / NBRC 100440) (Methanococcus jannaschii).